We begin with the raw amino-acid sequence, 437 residues long: Ribosomal protein uS12 methylthiotransferase RimO (437 aa).

An MTTase N-terminal domain is found at 4–114 (PRVSFVSLGC…VMNAVHEVAP (111 aa)). 6 residues coordinate [4Fe-4S] cluster: Cys13, Cys49, Cys78, Cys145, Cys149, and Cys152. Residues 131-369 (LTPRHYAYLK…MAKQQQISTN (239 aa)) form the Radical SAM core domain. One can recognise a TRAM domain in the interval 372-437 (KKKVGKRLPV…DAYDLHGTAV (66 aa)).

This sequence belongs to the methylthiotransferase family. RimO subfamily. The cofactor is [4Fe-4S] cluster.

The protein localises to the cytoplasm. The catalysed reaction is L-aspartate(89)-[ribosomal protein uS12]-hydrogen + (sulfur carrier)-SH + AH2 + 2 S-adenosyl-L-methionine = 3-methylsulfanyl-L-aspartate(89)-[ribosomal protein uS12]-hydrogen + (sulfur carrier)-H + 5'-deoxyadenosine + L-methionine + A + S-adenosyl-L-homocysteine + 2 H(+). In terms of biological role, catalyzes the methylthiolation of an aspartic acid residue of ribosomal protein uS12. In Brucella abortus (strain S19), this protein is Ribosomal protein uS12 methylthiotransferase RimO.